The following is a 295-amino-acid chain: Indole-3-glycerol phosphate synthase (295 aa).

It belongs to the TrpC family.

It carries out the reaction 1-(2-carboxyphenylamino)-1-deoxy-D-ribulose 5-phosphate + H(+) = (1S,2R)-1-C-(indol-3-yl)glycerol 3-phosphate + CO2 + H2O. Its pathway is amino-acid biosynthesis; L-tryptophan biosynthesis; L-tryptophan from chorismate: step 4/5. The protein is Indole-3-glycerol phosphate synthase of Prochlorococcus marinus (strain MIT 9515).